A 307-amino-acid polypeptide reads, in one-letter code: Acyl transferase (307 aa).

Active-site charge relay system residues include Ser-116, Asp-213, and His-243.

This sequence belongs to the LuxD family.

It participates in lipid metabolism; fatty acid reduction for biolumincescence. In terms of biological role, acyl transferase is part of the fatty acid reductase system required for aldehyde biosynthesis; it produces fatty acids for the luminescent reaction. The polypeptide is Acyl transferase (Photorhabdus laumondii subsp. laumondii (strain DSM 15139 / CIP 105565 / TT01) (Photorhabdus luminescens subsp. laumondii)).